A 329-amino-acid chain; its full sequence is Biotin synthase (329 aa).

The region spanning 48–278 (FLGNGVDLCS…TKKIAVCGGR (231 aa)) is the Radical SAM core domain. Residues Cys66, Cys70, and Cys73 each coordinate [4Fe-4S] cluster. Positions 143 and 203 each coordinate [2Fe-2S] cluster.

Belongs to the radical SAM superfamily. Biotin synthase family. As to quaternary structure, homodimer. Requires [4Fe-4S] cluster as cofactor. It depends on [2Fe-2S] cluster as a cofactor.

The enzyme catalyses (4R,5S)-dethiobiotin + (sulfur carrier)-SH + 2 reduced [2Fe-2S]-[ferredoxin] + 2 S-adenosyl-L-methionine = (sulfur carrier)-H + biotin + 2 5'-deoxyadenosine + 2 L-methionine + 2 oxidized [2Fe-2S]-[ferredoxin]. Its pathway is cofactor biosynthesis; biotin biosynthesis; biotin from 7,8-diaminononanoate: step 2/2. Functionally, catalyzes the conversion of dethiobiotin (DTB) to biotin by the insertion of a sulfur atom into dethiobiotin via a radical-based mechanism. This chain is Biotin synthase, found in Geobacter metallireducens (strain ATCC 53774 / DSM 7210 / GS-15).